A 41-amino-acid chain; its full sequence is Fibrinogen beta chain (41 aa).

The tract at residues 1 to 41 (ADDYDDEVLPDARGHRPIDRKREELPSLRPAPPPISGGGYR) is disordered. Residue Tyr-4 is modified to Sulfotyrosine. The span at 10–26 (PDARGHRPIDRKREELP) shows a compositional bias: basic and acidic residues. Positions 14–16 (GHR) are beta-chain polymerization, binding distal domain of another fibrin.

As to quaternary structure, heterohexamer; disulfide linked. Contains 2 sets of 3 non-identical chains (alpha, beta and gamma). The 2 heterotrimers are in head to head conformation with the N-termini in a small central domain. In terms of processing, conversion of fibrinogen to fibrin is triggered by thrombin, which cleaves fibrinopeptides A and B from alpha and beta chains, and thus exposes the N-terminal polymerization sites responsible for the formation of the soft clot.

It is found in the secreted. In terms of biological role, cleaved by the protease thrombin to yield monomers which, together with fibrinogen alpha (FGA) and fibrinogen gamma (FGG), polymerize to form an insoluble fibrin matrix. Fibrin has a major function in hemostasis as one of the primary components of blood clots. In addition, functions during the early stages of wound repair to stabilize the lesion and guide cell migration during re-epithelialization. Was originally thought to be essential for platelet aggregation, based on in vitro studies using anticoagulated blood. However subsequent studies have shown that it is not absolutely required for thrombus formation in vivo. Enhances expression of SELP in activated platelets. Maternal fibrinogen is essential for successful pregnancy. Fibrin deposition is also associated with infection, where it protects against IFNG-mediated hemorrhage. May also facilitate the antibacterial immune response via both innate and T-cell mediated pathways. This Oryctolagus cuniculus (Rabbit) protein is Fibrinogen beta chain (FGB).